A 343-amino-acid chain; its full sequence is MNHSVALNFADGKTFFIAVQEDELLLDAAVRQGINLPLDCREGVCGTCQGTCETGIYEQEYVDEDALSERDLAKRKMLACQTRVKSNAAFYFDHHSSICNAGETLKIATVVTGVELVSETTAILHLDASQHVKQLDFLPGQYARLQIPDTDDWRSYSFANRPNASNQLQFLIRLLPNGVMSNYLRERCQVGQTLIMEAPLGSFYLREVERPLVFIAGGTGLSAFLGMLDNIAEQPNQPSVHLYYGVNTEADLCEQKRLTTYAERIKNFSYHPIISKASEQWQGKSGFIHEHLDKNQLSEQSFDMYLCGPPPMIEAVKTWLDEQAIADCHIYSEKFLQSNTAKT.

The region spanning 3 to 96 (HSVALNFADG…NAAFYFDHHS (94 aa)) is the 2Fe-2S ferredoxin-type domain. [2Fe-2S] cluster is bound by residues cysteine 40, cysteine 45, cysteine 48, and cysteine 80. A ferredoxin-reductase region spans residues 98 to 338 (ICNAGETLKI…HIYSEKFLQS (241 aa)). The 104-residue stretch at 103–206 (ETLKIATVVT…EAPLGSFYLR (104 aa)) folds into the FAD-binding FR-type domain.

The protein belongs to the bacterial ring-hydroxylating dioxygenase ferredoxin reductase family. In terms of assembly, monomer. It is part of the anthranilate dioxygenase two component enzyme system. The other component is an oxygenase component consisting of 3 large (AntA) and 3 small (AntB) subunits. FAD serves as cofactor. It depends on [2Fe-2S] cluster as a cofactor.

The enzyme catalyses 2 reduced [2Fe-2S]-[ferredoxin] + NAD(+) + H(+) = 2 oxidized [2Fe-2S]-[ferredoxin] + NADH. Its pathway is aromatic compound metabolism; anthranilate degradation via hydroxylation; catechol from anthranilate: step 1/1. Functionally, electron transfer component of anthranilate 1,2-dioxygenase system. This chain is Anthranilate 1,2-dioxygenase electron transfer component, found in Acinetobacter baylyi (strain ATCC 33305 / BD413 / ADP1).